A 381-amino-acid chain; its full sequence is Cobalt-precorrin-5B C(1)-methyltransferase (381 aa).

Belongs to the CbiD family.

It catalyses the reaction Co-precorrin-5B + S-adenosyl-L-methionine = Co-precorrin-6A + S-adenosyl-L-homocysteine. Its pathway is cofactor biosynthesis; adenosylcobalamin biosynthesis; cob(II)yrinate a,c-diamide from sirohydrochlorin (anaerobic route): step 6/10. Its function is as follows. Catalyzes the methylation of C-1 in cobalt-precorrin-5B to form cobalt-precorrin-6A. The chain is Cobalt-precorrin-5B C(1)-methyltransferase from Prochlorococcus marinus (strain SARG / CCMP1375 / SS120).